The primary structure comprises 568 residues: K(+) efflux antiporter 5 (568 aa).

The signal sequence occupies residues 1–20; it reads MARFAVIGLTFLLLLGTSLS. The tract at residues 59-78 is disordered; the sequence is EFSENDSPEGSDGASFNSSV. 12 helical membrane-spanning segments follow: residues 154-174, 178-198, 201-221, 230-250, 264-284, 298-318, 334-354, 389-409, 422-442, 447-467, 476-496, and 510-530; these read LISDLVVIIVFAAIGGIVFSC, PVIVGYLLAGSIIGPGGLKFI, MVQVETVAQFGVVFLLFALGL, VVGPVAVLGGLLQIVLLMFLC, GIFVGAFLSMSSTAVVVKFLV, IGILIFQDCVVGLLFALLPVL, LLLILSIYLTVASLLTWSFVP, LGLSLELGSFVAGVMLSTTEF, NLFAALFLSSIGMLINVHFLW, ILLASVILVIVIKTAIAAVVV, ISFHVGVLLAQIGEFAFVLLS, and LLLLGTTALSLVTTPLLFKLI.

The protein belongs to the monovalent cation:proton antiporter 2 (CPA2) transporter (TC 2.A.37) family. KEA (TC 2.A.37.1) subfamily. In terms of tissue distribution, expressed in roots, stems, leaves, flowers and silique.

The protein localises to the golgi apparatus membrane. The protein resides in the golgi apparatus. Its subcellular location is the trans-Golgi network membrane. It is found in the prevacuolar compartment membrane. It localises to the endomembrane system. The catalysed reaction is K(+)(in) + H(+)(out) = K(+)(out) + H(+)(in). In terms of biological role, electroneutral K(+)/H(+) efflux antiporter involved in K(+) homeostasis and osmotic adjustment. Together with KEA4 and KEA6, promotes growth and development, and facilitates endosomal pH and ions homeostasis, as well as salt tolerance (e.g. K(+), NaCl and LiCl), probably by supporting cell wall biosynthesis during rapid etiolated seedling growth. This is K(+) efflux antiporter 5 from Arabidopsis thaliana (Mouse-ear cress).